A 154-amino-acid chain; its full sequence is MKNADRGVAAELDGSDLRVAIVQARFNAAITEQLASSCIAELEALGVLAKHIKHVTVPGALEVALALQALAEQKDHDALIALGCIIRGETYHFELVANESGAAVTRVSLEHGVPIANAILTVENEAQAWARADEKGRDAARVAVEMANLMEDLS.

5-amino-6-(D-ribitylamino)uracil is bound by residues F26, 60-62 (ALE), and 84-86 (CII). 89 to 90 (ET) contacts (2S)-2-hydroxy-3-oxobutyl phosphate. Catalysis depends on H92, which acts as the Proton donor. N117 contacts 5-amino-6-(D-ribitylamino)uracil. Residue R131 coordinates (2S)-2-hydroxy-3-oxobutyl phosphate.

The protein belongs to the DMRL synthase family.

The enzyme catalyses (2S)-2-hydroxy-3-oxobutyl phosphate + 5-amino-6-(D-ribitylamino)uracil = 6,7-dimethyl-8-(1-D-ribityl)lumazine + phosphate + 2 H2O + H(+). Its pathway is cofactor biosynthesis; riboflavin biosynthesis; riboflavin from 2-hydroxy-3-oxobutyl phosphate and 5-amino-6-(D-ribitylamino)uracil: step 1/2. Functionally, catalyzes the formation of 6,7-dimethyl-8-ribityllumazine by condensation of 5-amino-6-(D-ribitylamino)uracil with 3,4-dihydroxy-2-butanone 4-phosphate. This is the penultimate step in the biosynthesis of riboflavin. The protein is 6,7-dimethyl-8-ribityllumazine synthase of Leptothrix cholodnii (strain ATCC 51168 / LMG 8142 / SP-6) (Leptothrix discophora (strain SP-6)).